The primary structure comprises 751 residues: Protein CLMP1 (751 aa).

Residues 1 to 11 (MGKSGGRKKKS) are compositionally biased toward basic residues. A disordered region spans residues 1–33 (MGKSGGRKKKSGGSNSNSSQVNSSETSGLSKPS). A compositionally biased stretch (low complexity) spans 12 to 28 (GGSNSNSSQVNSSETSG). TPR repeat units follow at residues 51–84 (AHEL…IPKS), 89–124 (AVFH…QPGF), and 125–158 (TRAL…DPNH). One can recognise a PB1 domain in the interval 290 to 382 (WRPLKFVYDH…GMLRLHVVDV (93 aa)). Positions 386–443 (QEPMLLEEEEEEVEEKPVIEEVISSPTESLSETEINTEKTDKEVEKEKASSSEDPETK) are disordered. The span at 390 to 399 (LLEEEEEEVE) shows a compositional bias: acidic residues. Over residues 409–419 (SSPTESLSETE) the composition is skewed to polar residues. Positions 421-443 (NTEKTDKEVEKEKASSSEDPETK) are enriched in basic and acidic residues. TPR repeat units follow at residues 434–468 (ASSS…DPDA), 481–514 (SEAL…AFFN), and 536–570 (EVVA…KPDF). Residues 630–648 (EQRMDDLKNPNSNKKEEVS) are compositionally biased toward basic and acidic residues. The segment at 630-663 (EQRMDDLKNPNSNKKEEVSKRRKKQGGDGNEEVS) is disordered.

As to quaternary structure, interacts with myosin XI-K. In terms of tissue distribution, expressed in roots, stems, leaves, apex, flowers and seeds. Detected throughout the petiole in juvenile and young leaves, but restricted to the petiole midvein in older leaves. Expressed in hydathodes, at the base of the trichome, in the vascular cylinder of primary root and lateral root, in emerging lateral root primordia, in pollen and in developing embryos, but not in mature embryos.

The protein localises to the cytoplasm. Its function is as follows. Required for plastid separation and partitioning during cell division. Not involved in plastid constriction or in the organization of cytoplasmic actin cables. Contributes to polar growth of root hairs. This Arabidopsis thaliana (Mouse-ear cress) protein is Protein CLMP1.